The primary structure comprises 224 residues: Cytidylate kinase (224 aa).

9-17 contributes to the ATP binding site; that stretch reads GPSGVGKGT.

It belongs to the cytidylate kinase family. Type 1 subfamily.

The protein resides in the cytoplasm. The enzyme catalyses CMP + ATP = CDP + ADP. It carries out the reaction dCMP + ATP = dCDP + ADP. The polypeptide is Cytidylate kinase (Dichelobacter nodosus (strain VCS1703A)).